We begin with the raw amino-acid sequence, 329 residues long: Malate dehydrogenase (329 aa).

12–18 (GAAGQIG) is an NAD(+) binding site. The substrate site is built by R93 and R99. NAD(+) is bound by residues N106, Q113, and 130–132 (VGN). Residues N132 and R163 each contribute to the substrate site. The active-site Proton acceptor is the H188.

The protein belongs to the LDH/MDH superfamily. MDH type 2 family.

It carries out the reaction (S)-malate + NAD(+) = oxaloacetate + NADH + H(+). In terms of biological role, catalyzes the reversible oxidation of malate to oxaloacetate. In Frankia alni (strain DSM 45986 / CECT 9034 / ACN14a), this protein is Malate dehydrogenase.